Consider the following 399-residue polypeptide: MSIRYIDEIENLSGKKLFMRVDFNVPLDDNQNITEDTRIRAVLPSINYALDQKAKIILASHLGRPKGERKEKYSMAPAAKRLSRLLGKEVKLASDCIGDEVKAMINAMQPGDVIMLENVRFYAGEEKNDADFAKALANDCDVYVNDAFAVSHRAHASVEAITNCFPVVAAGFLMKNEMNYFEKAMKNPIRPLVAILGGAKVSGKIEVLENLCDKVDKIIIGGGMAFTFLKGMGYNVGKSLVEDNLIDTAMKTYEKARAQGVKFYLPVDCVVADQFNPAAETKVCPIQEIPEGWMALDVGPATVTLFTEALQNAKTIVWNGPMGVFEMDAFSRGTFAMVSAVANSYALTIVGGGDTDVAVHRAGEYAKISYISTGGGAFLELLEGKKLPGIKVLEDKGHL.

Residues 22–24 (DFN), Arg-38, 61–64 (HLGR), Arg-120, and Arg-153 each bind substrate. Residues Lys-204, Glu-326, and 352-355 (GGDT) contribute to the ATP site.

It belongs to the phosphoglycerate kinase family. In terms of assembly, monomer.

The protein resides in the cytoplasm. The catalysed reaction is (2R)-3-phosphoglycerate + ATP = (2R)-3-phospho-glyceroyl phosphate + ADP. It functions in the pathway carbohydrate degradation; glycolysis; pyruvate from D-glyceraldehyde 3-phosphate: step 2/5. The sequence is that of Phosphoglycerate kinase from Geobacter sp. (strain M21).